The chain runs to 417 residues: Probable uracil permease (417 aa).

Topologically, residues 1–13 are cytoplasmic; the sequence is MTNQNPPVLLEQN. Residues 14–37 form a helical membrane-spanning segment; that stretch reads HAKQAFVGLQMLFVAFGALVLVPL. Over 38–41 the chain is Periplasmic; that stretch reads ITGL. The helical transmembrane segment at 42–61 threads the bilayer; the sequence is NANTALLTAGIGTLLFQLCT. Topologically, residues 62-64 are cytoplasmic; the sequence is GRQ. Residues 65-81 form a discontinuously helical membrane-spanning segment; that stretch reads VPIFLASSFAFIAPIQY. Residue phenylalanine 73 participates in uracil binding. Topologically, residues 83–90 are periplasmic; it reads VTTWGIAT. The helical transmembrane segment at 91-111 threads the bilayer; that stretch reads TMGGLVFTGLVYFALSTLVKI. At 112-123 the chain is on the cytoplasmic side; the sequence is KGAGALQKVFPP. Residues 124–145 traverse the membrane as a helical segment; sequence VVVGPVIIIIGMGLAPVAVDMA. At 146-154 the chain is on the periplasmic side; the sequence is LGKNSTYQY. A helical membrane pass occupies residues 155-170; the sequence is NDAVFVSMATLLTTLG. Residues 171-177 are Cytoplasmic-facing; it reads VAVFAKG. A helical transmembrane segment spans residues 178–198; that stretch reads MMKLIPIMFGIVVGYILCLFL. At 199–223 the chain is on the periplasmic side; that stretch reads GLINFQPVIDAPWFSVPEITTPEFK. Residues 224-247 form a helical membrane-spanning segment; it reads LEAILYLLPIAIAPAVEHVGGIMA. Glutamate 240 provides a ligand contact to uracil. Residues 248-260 are Cytoplasmic-facing; the sequence is ISSVTGKDFLQKP. The chain crosses the membrane as a helical span at residues 261-280; it reads GLHRTLLGDGIATSAASFLG. Residues 281–297 form a discontinuously helical membrane-spanning segment; that stretch reads GPPNTTYAEVTGAVMLT. Position 289 (glutamate 289) interacts with uracil. Residues 298 to 300 are Cytoplasmic-facing; the sequence is RNF. The chain crosses the membrane as a helical span at residues 301–318; sequence NPKIMTWAAVWAIAISFC. The Periplasmic segment spans residues 319–331; sequence GKVGAFLSTIPTI. Residues 332–353 form a helical membrane-spanning segment; sequence VMGGIMMLVFGSIAVVGMSTLI. Over 354-364 the chain is Cytoplasmic; sequence RGKVDVTEARN. The discontinuously helical intramembrane region spans 365–400; it reads LCIISVVMTFGIGGMFVNFGEVSLKGISLCAVVAIL. Topologically, residues 401–416 are cytoplasmic; sequence LNLILPKAKNTPIEEN.

It belongs to the nucleobase:cation symporter-2 (NCS2) (TC 2.A.40) family.

Its subcellular location is the cell inner membrane. It carries out the reaction uracil(in) + H(+)(in) = uracil(out) + H(+)(out). Transport of uracil in the cell. The polypeptide is Probable uracil permease (uraA) (Pasteurella multocida (strain Pm70)).